Consider the following 316-residue polypeptide: HPr kinase/phosphorylase (316 aa).

Residues His-146 and Lys-167 contribute to the active site. Position 161–168 (161–168 (GESGLGKS)) interacts with ATP. Position 168 (Ser-168) interacts with Mg(2+). Asp-185 (proton acceptor; for phosphorylation activity. Proton donor; for dephosphorylation activity) is an active-site residue. The interval 209 to 218 (LEVRGIGLLD) is important for the catalytic mechanism of both phosphorylation and dephosphorylation. Glu-210 provides a ligand contact to Mg(2+). Arg-252 is a catalytic residue. Positions 273–278 (QVEAGR) are important for the catalytic mechanism of dephosphorylation.

The protein belongs to the HPrK/P family. As to quaternary structure, homohexamer. Mg(2+) is required as a cofactor.

The enzyme catalyses [HPr protein]-L-serine + ATP = [HPr protein]-O-phospho-L-serine + ADP + H(+). The catalysed reaction is [HPr protein]-O-phospho-L-serine + phosphate + H(+) = [HPr protein]-L-serine + diphosphate. Functionally, catalyzes the ATP- as well as the pyrophosphate-dependent phosphorylation of a specific serine residue in HPr, a phosphocarrier protein of the phosphoenolpyruvate-dependent sugar phosphotransferase system (PTS). HprK/P also catalyzes the pyrophosphate-producing, inorganic phosphate-dependent dephosphorylation (phosphorolysis) of seryl-phosphorylated HPr (P-Ser-HPr). The polypeptide is HPr kinase/phosphorylase (Polaromonas sp. (strain JS666 / ATCC BAA-500)).